Consider the following 202-residue polypeptide: Probable nicotinate-nucleotide adenylyltransferase (202 aa).

The protein belongs to the NadD family.

The enzyme catalyses nicotinate beta-D-ribonucleotide + ATP + H(+) = deamido-NAD(+) + diphosphate. Its pathway is cofactor biosynthesis; NAD(+) biosynthesis; deamido-NAD(+) from nicotinate D-ribonucleotide: step 1/1. Its function is as follows. Catalyzes the reversible adenylation of nicotinate mononucleotide (NaMN) to nicotinic acid adenine dinucleotide (NaAD). The protein is Probable nicotinate-nucleotide adenylyltransferase of Synechococcus sp. (strain JA-2-3B'a(2-13)) (Cyanobacteria bacterium Yellowstone B-Prime).